Reading from the N-terminus, the 599-residue chain is Elongation factor 4 (599 aa).

Residues 2 to 184 (NHIRNFSIIA…RLVRDIPAPE (183 aa)) form the tr-type G domain. Residues 14–19 (DHGKST) and 131–134 (NKID) contribute to the GTP site.

Belongs to the TRAFAC class translation factor GTPase superfamily. Classic translation factor GTPase family. LepA subfamily.

It is found in the cell inner membrane. The enzyme catalyses GTP + H2O = GDP + phosphate + H(+). Its function is as follows. Required for accurate and efficient protein synthesis under certain stress conditions. May act as a fidelity factor of the translation reaction, by catalyzing a one-codon backward translocation of tRNAs on improperly translocated ribosomes. Back-translocation proceeds from a post-translocation (POST) complex to a pre-translocation (PRE) complex, thus giving elongation factor G a second chance to translocate the tRNAs correctly. Binds to ribosomes in a GTP-dependent manner. This chain is Elongation factor 4, found in Yersinia pestis (strain Pestoides F).